Consider the following 347-residue polypeptide: Glutamyl-Q tRNA(Asp) synthetase (347 aa).

L-glutamate contacts are provided by residues 31-35 (RFAPS) and Glu67. The short motif at 34 to 44 (PSPTSALHLGN) is the 'HIGH' region element. Zn(2+)-binding residues include Cys121, Cys123, Tyr143, and Cys147. L-glutamate contacts are provided by Tyr203 and Arg221. The 'KMSKS' region signature appears at 259-263 (RLSKS). An ATP-binding site is contributed by Lys262.

The protein belongs to the class-I aminoacyl-tRNA synthetase family. GluQ subfamily. Zn(2+) is required as a cofactor.

In terms of biological role, catalyzes the tRNA-independent activation of glutamate in presence of ATP and the subsequent transfer of glutamate onto a tRNA(Asp). Glutamate is transferred on the 2-amino-5-(4,5-dihydroxy-2-cyclopenten-1-yl) moiety of the queuosine in the wobble position of the QUC anticodon. The protein is Glutamyl-Q tRNA(Asp) synthetase of Cutibacterium acnes (strain DSM 16379 / KPA171202) (Propionibacterium acnes).